We begin with the raw amino-acid sequence, 149 residues long: Calmodulin (149 aa).

Ala-2 is modified (N-acetylalanine). EF-hand domains are found at residues 8–43, 44–79, 81–116, and 117–149; these read EQIA…LGQN, PTEA…KMKE, DSEE…LGEK, and LTDE…MTSK. Ca(2+) contacts are provided by Asp-21, Asp-23, Asp-25, Thr-27, Glu-32, Asp-57, Asp-59, Asn-61, Thr-63, Glu-68, Asp-94, Asp-96, Asn-98, and Glu-105. N6,N6,N6-trimethyllysine is present on Lys-116. 5 residues coordinate Ca(2+): Asp-130, Asp-132, Asp-134, Gln-136, and Glu-141.

This sequence belongs to the calmodulin family.

Calmodulin mediates the control of a large number of enzymes, ion channels and other proteins by Ca(2+). Among the enzymes to be stimulated by the calmodulin-Ca(2+) complex are a number of protein kinases and phosphatases. This Suberites domuncula (Sponge) protein is Calmodulin.